The primary structure comprises 489 residues: Ulvan Lyase-PL25 (489 aa).

A signal peptide spans 1–31; sequence MNLNKTLRKNSPSGYKALLTFSIICGLMATG. Residue Cys-32 is the site of N-palmitoyl cysteine attachment. Cys-32 carries the S-diacylglycerol cysteine lipid modification. Asn-60 and Asn-122 together coordinate substrate. The active-site Proton donor is the His-123. Lys-125 and His-143 together coordinate substrate. Tyr-188 acts as the Proton acceptor in catalysis. Residues Arg-204, His-208, and Tyr-246 each coordinate substrate. His-208 is a Zn(2+) binding site. Zn(2+) is bound by residues His-264, Cys-266, and His-278. Residue His-278 participates in substrate binding.

It belongs to the polysaccharide lyase 25 family.

The protein resides in the cell membrane. Its function is as follows. Ulvan lyase involved in ulvan degradation. Ulvan is the main polysaccharide component of the Ulvales (green seaweed) cell wall. It is composed of disaccharide building blocks comprising 3-sulfated rhamnose (Rha3S) linked to D-glucuronic acid (GlcA), L-iduronic acid (IduA), or D-xylose (Xyl). Ulvan lyase catalyzes the endolytic cleavage of the glycosidic bond between Rha3S and the uronic acids GlcA or IduA, producing oligosaccharides that have unsaturated 4-deoxy-L-threo-hex-4-enopyranosiduronic acid (deltaUA) at the non-reducing end. This results eventually in the degradation of the ulvan polysaccharide into deltaUA-Rha3S disaccharides and deltaUA-Rha3S-Xyl-Rha3S tetrasaccharides. The polypeptide is Ulvan Lyase-PL25 (Pseudoalteromonas sp. (strain PLSV)).